The sequence spans 558 residues: Membrane protein insertase YidC (558 aa).

5 helical membrane passes run I3–W23, F364–F384, L438–V458, P477–P497, and M508–L528.

It belongs to the OXA1/ALB3/YidC family. Type 1 subfamily. As to quaternary structure, interacts with the Sec translocase complex via SecD. Specifically interacts with transmembrane segments of nascent integral membrane proteins during membrane integration.

Its subcellular location is the cell inner membrane. In terms of biological role, required for the insertion and/or proper folding and/or complex formation of integral membrane proteins into the membrane. Involved in integration of membrane proteins that insert both dependently and independently of the Sec translocase complex, as well as at least some lipoproteins. Aids folding of multispanning membrane proteins. The protein is Membrane protein insertase YidC of Burkholderia pseudomallei (strain 668).